The chain runs to 400 residues: S-adenosylmethionine synthase (400 aa).

His-17 is an ATP binding site. Position 19 (Asp-19) interacts with Mg(2+). Position 45 (Glu-45) interacts with K(+). Residues Glu-58 and Gln-101 each contribute to the L-methionine site. The tract at residues 101–111 (QSADIAMGVDQ) is flexible loop. ATP-binding positions include 177–179 (DGK), 244–245 (RF), Asp-253, 259–260 (RK), Ala-276, and Lys-280. Residue Asp-253 coordinates L-methionine. Lys-284 contributes to the L-methionine binding site.

It belongs to the AdoMet synthase family. Homotetramer; dimer of dimers. Mg(2+) serves as cofactor. Requires K(+) as cofactor.

It is found in the cytoplasm. The catalysed reaction is L-methionine + ATP + H2O = S-adenosyl-L-methionine + phosphate + diphosphate. The protein operates within amino-acid biosynthesis; S-adenosyl-L-methionine biosynthesis; S-adenosyl-L-methionine from L-methionine: step 1/1. Its function is as follows. Catalyzes the formation of S-adenosylmethionine (AdoMet) from methionine and ATP. The overall synthetic reaction is composed of two sequential steps, AdoMet formation and the subsequent tripolyphosphate hydrolysis which occurs prior to release of AdoMet from the enzyme. The polypeptide is S-adenosylmethionine synthase (Bacillus velezensis (strain DSM 23117 / BGSC 10A6 / LMG 26770 / FZB42) (Bacillus amyloliquefaciens subsp. plantarum)).